A 516-amino-acid polypeptide reads, in one-letter code: Flavin-dependent halogenase armH2 (516 aa).

3 residues coordinate FAD: Gly-16, Ala-19, and Glu-49. Residues Ser-328 and Gly-329 each coordinate chloride. Position 330 (Ile-330) interacts with FAD. The tract at residues 440–475 (PQANGNGAAKQDAVPAPIPVALSSGAGPEKDAKRRE) is disordered.

The protein belongs to the flavin-dependent halogenase family.

The enzyme catalyses melleolide F + FADH2 + chloride + O2 = 6'-chloromelleolide F + FAD + 2 H2O + H(+). In terms of biological role, flavin-dependent halogenase involved in the biosynthesis of melleolides, a range of antifungal and phytotoxic polyketide derivatives composed of an orsellinic acid (OA) moiety esterified to various sesquiterpene alcohols. The halogenase catalyzes the transfer of a single chlorine atom to the melleolide backbone, resulting in a 6'-chloromelleolide product. The enzyme acts on free substrate and does not depend on carrier-protein-dependent acceptor molecules. This Armillaria mellea (Honey mushroom) protein is Flavin-dependent halogenase armH2.